A 429-amino-acid chain; its full sequence is Proton extrusion protein PxcA (429 aa).

The segment at 139–161 (LNGPEAPQTNGDRPDNKPKVETV) is disordered. Basic and acidic residues predominate over residues 150 to 161 (DRPDNKPKVETV). 4 helical membrane-spanning segments follow: residues 211–231 (FLLT…IAIT), 306–326 (AYEN…ILLI), 353–373 (LIIL…WEII), and 389–409 (FNFL…KYWI).

This sequence belongs to the CemA family.

It localises to the cell inner membrane. In terms of biological role, required for H(+) efflux immediately after light irradiation to form a rapid H(+) concentration gradient across the thylakoid membranes. Together with PxcL, contributes to transient H(+) uptake following dark to light transition. This is Proton extrusion protein PxcA from Picosynechococcus sp. (strain ATCC 27264 / PCC 7002 / PR-6) (Agmenellum quadruplicatum).